Here is an 817-residue protein sequence, read N- to C-terminus: Transcription factor yanR (817 aa).

The zn(2)-C6 fungal-type DNA-binding region spans 19–46; it reads CIVCRRRKVRCGREHPECANCVRMKENC. Disordered regions lie at residues 102-161, 180-218, and 733-775; these read GNVL…PQVD, HHAS…YSGL, and SLSS…VADS. Positions 113-127 are enriched in pro residues; that stretch reads LPRPTISPASAPPPQ. Positions 146–158 are enriched in polar residues; that stretch reads SSTILTPAPSSHP. Positions 184–195 are enriched in low complexity; that stretch reads SRAGTSRTSSVS. 2 stretches are compositionally biased toward polar residues: residues 208–217 and 748–760; these read APSTSTSYSG and EAPS…QMPS.

The protein localises to the nucleus. Functionally, transcription factor that regulates the expression of the gene cluster that mediates the biosynthesis of yanuthone D, a fungal isoprenoid epoxycyclohexenone that acts as an antibiotic against fungi and bacteria. This is Transcription factor yanR from Aspergillus niger (strain ATCC 1015 / CBS 113.46 / FGSC A1144 / LSHB Ac4 / NCTC 3858a / NRRL 328 / USDA 3528.7).